The primary structure comprises 479 residues: Odorant receptor coreceptor (479 aa).

The Cytoplasmic portion of the chain corresponds to 1-43; it reads MHVQPTKYHGLVLDLMPNIRLMQGFGHFLFRYVSGPVLIRKLY. Residues 44–64 traverse the membrane as a helical segment; it reads SWWNLIMILLQYFAIMGNLVM. At 65–73 the chain is on the extracellular side; sequence NTGDVNELT. A helical transmembrane segment spans residues 74–94; that stretch reads ANTITTLFFTHSVTKFIYVAV. The Cytoplasmic segment spans residues 95–133; sequence NSEHFYRTLGIWNQPNSHSLFAESDARYHSIALAKMRKL. The chain crosses the membrane as a helical span at residues 134 to 154; it reads LVMVMVTTVLSVVAWITITFF. The Extracellular portion of the chain corresponds to 155–187; sequence GDSVKNVFDKETNETYTVEIPRLPIKALYPWDA. N167 carries N-linked (GlcNAc...) asparagine glycosylation. Residues 188 to 208 traverse the membrane as a helical segment; it reads MSGVPYFFSFVYQAYFLLFSM. The Cytoplasmic segment spans residues 209–344; the sequence is CQANLADVMF…VERHKHVVRL (136 aa). A helical membrane pass occupies residues 345–365; that stretch reads VSAIGETYGAALLLHMLTSTI. Residues 366 to 383 lie on the Extracellular side of the membrane; the sequence is KLTLLAYQATKIDALNVY. A helical transmembrane segment spans residues 384 to 404; it reads GLTVIGYLVYALAQVFLFCIF. Residues 405 to 455 lie on the Cytoplasmic side of the membrane; that stretch reads GNRLIEESSSVMEAAYSCHWYDGSEEAKTFVQIVCQQCQKAMTISGAKFFT. A helical transmembrane segment spans residues 456–476; that stretch reads VSLDLFASVLGAVVTYFMVLV. At 477-479 the chain is on the extracellular side; the sequence is QLK.

This sequence belongs to the insect chemoreceptor superfamily. Heteromeric odorant receptor channel (TC 1.A.69) family. Orco subfamily. As to quaternary structure, heterodimer with conventional odorant receptors (ORs). As to expression, expressed in female antenna, maxillary palp and proboscis. Not detected in male tissues.

Its subcellular location is the cell membrane. Odorant coreceptor which complexes with conventional odorant receptors (ORs) to form odorant-sensing units, providing sensitive and prolonged odorant signaling and calcium permeability. Orco is a universal and integral part of the functional odorant receptor, involved in the dendritic localization of other olfactory receptors. Required for detecting a host for blood feeding. Plays a key role in preferred attraction of females for humans over non-human hosts for blood feeding. This chain is Odorant receptor coreceptor, found in Aedes albopictus (Asian tiger mosquito).